The following is a 179-amino-acid chain: Large ribosomal subunit protein uL5 (179 aa).

Belongs to the universal ribosomal protein uL5 family. As to quaternary structure, part of the 50S ribosomal subunit; part of the 5S rRNA/L5/L18/L25 subcomplex. Contacts the 5S rRNA and the P site tRNA. Forms a bridge to the 30S subunit in the 70S ribosome.

This is one of the proteins that bind and probably mediate the attachment of the 5S RNA into the large ribosomal subunit, where it forms part of the central protuberance. In the 70S ribosome it contacts protein S13 of the 30S subunit (bridge B1b), connecting the 2 subunits; this bridge is implicated in subunit movement. Contacts the P site tRNA; the 5S rRNA and some of its associated proteins might help stabilize positioning of ribosome-bound tRNAs. In Pseudoalteromonas translucida (strain TAC 125), this protein is Large ribosomal subunit protein uL5.